The chain runs to 130 residues: Phosphoribosyl-AMP cyclohydrolase (130 aa).

Position 77 (aspartate 77) interacts with Mg(2+). Cysteine 78 is a Zn(2+) binding site. 2 residues coordinate Mg(2+): aspartate 79 and aspartate 81. Positions 95 and 102 each coordinate Zn(2+).

Belongs to the PRA-CH family. In terms of assembly, homodimer. It depends on Mg(2+) as a cofactor. Zn(2+) is required as a cofactor.

It is found in the cytoplasm. The catalysed reaction is 1-(5-phospho-beta-D-ribosyl)-5'-AMP + H2O = 1-(5-phospho-beta-D-ribosyl)-5-[(5-phospho-beta-D-ribosylamino)methylideneamino]imidazole-4-carboxamide. It participates in amino-acid biosynthesis; L-histidine biosynthesis; L-histidine from 5-phospho-alpha-D-ribose 1-diphosphate: step 3/9. Catalyzes the hydrolysis of the adenine ring of phosphoribosyl-AMP. In Pseudomonas syringae pv. tomato (strain ATCC BAA-871 / DC3000), this protein is Phosphoribosyl-AMP cyclohydrolase.